Here is a 581-residue protein sequence, read N- to C-terminus: Kelch-like protein 30 (581 aa).

One can recognise a BTB domain in the interval 33-100 (ADVTLLVGDQ…VYTGRLTITQ (68 aa)). The BACK domain occupies 135–237 (CLGICEFGEQ…PRPCVQQLLA (103 aa)). Kelch repeat units lie at residues 280 to 327 (EEDE…ALNS), 328 to 378 (DVYV…ALNG), 379 to 423 (EIYA…GCQG), 425 to 472 (LYLV…ALNG), 474 to 514 (LYLI…PLGD), and 515 to 564 (LLYV…TIFL).

The chain is Kelch-like protein 30 (Klhl30) from Mus musculus (Mouse).